A 102-amino-acid polypeptide reads, in one-letter code: Hemoglobin subunit beta-Z (102 aa).

The 102-residue stretch at 1–102 folds into the Globin domain; that stretch reads FGNLSSAQAI…VANALSHKYH (102 aa). Residues His19 and His48 each coordinate heme b.

The protein belongs to the globin family. Heterotetramer of two alpha chains and two beta chains.

Its function is as follows. This is an embryonic beta chain. In Mesocricetus auratus (Golden hamster), this protein is Hemoglobin subunit beta-Z (HBBZ).